A 527-amino-acid polypeptide reads, in one-letter code: Tetanolysin (527 aa).

An N-terminal signal peptide occupies residues 1–32; it reads MNKNVLKFVSRSLLIFSMTGLISNYNSSNVLA. Transmembrane regions (beta stranded) follow at residues 215–228, 235–244, 313–322, and 330–342; these read QSQLSAAVGCNFKA, IDFDSIFKGE, SSHVKAAFKA, and SSNAEYKDILNQS. The Conserved undecapeptide motif lies at 484 to 494; that stretch reads ECTGLAWEWWR. A Cholesterol binding motif is present at residues 516–517; the sequence is TL.

It belongs to the cholesterol-dependent cytolysin family. In terms of assembly, homooligomeric pore complex containing 35-50 subunits; when inserted in the host membrane. In terms of processing, purified 48 and 53 kDa proteins with 4 different pIs (6.1, 5.6, 5.3 and 6.6) in decreasing order of activity.

The protein resides in the secreted. The protein localises to the host cell membrane. Cytolysis of host cells is inhibited by cholesterol. Its function is as follows. A cholesterol-dependent toxin that causes cytolysis by forming pores in cholesterol-containing host membranes. After binding to target membranes, the protein undergoes a major conformation change, leading to its insertion in the host membrane and formation of an oligomeric pore complex. Cholesterol is required for binding to host membranes, membrane insertion and pore formation; cholesterol binding is mediated by a Thr-Leu pair in the C-terminus. The sequence is that of Tetanolysin from Clostridium tetani (strain Massachusetts / E88).